Reading from the N-terminus, the 583-residue chain is Tetratricopeptide repeat protein 39C (583 aa).

A disordered region spans residues 1 to 22 (MAGSEQQRPRRRDDGDSDAAAA). 3 TPR repeats span residues 315-348 (SLFM…AVDQ), 353-386 (HVCL…SRWS), and 485-518 (GLKY…ELCR).

The protein belongs to the TTC39 family.

This chain is Tetratricopeptide repeat protein 39C (TTC39C), found in Homo sapiens (Human).